Here is a 477-residue protein sequence, read N- to C-terminus: 3-isopropylmalate dehydratase large subunit (477 aa).

C352, C413, and C416 together coordinate [4Fe-4S] cluster.

It belongs to the aconitase/IPM isomerase family. LeuC type 1 subfamily. In terms of assembly, heterodimer of LeuC and LeuD. The cofactor is [4Fe-4S] cluster.

It catalyses the reaction (2R,3S)-3-isopropylmalate = (2S)-2-isopropylmalate. It participates in amino-acid biosynthesis; L-leucine biosynthesis; L-leucine from 3-methyl-2-oxobutanoate: step 2/4. Its function is as follows. Catalyzes the isomerization between 2-isopropylmalate and 3-isopropylmalate, via the formation of 2-isopropylmaleate. The protein is 3-isopropylmalate dehydratase large subunit of Pseudomonas putida (strain W619).